A 120-amino-acid polypeptide reads, in one-letter code: Small ribosomal subunit protein uS13 (120 aa).

Residues 93–120 (GLPVRGQNTKNNARTRKGPRRTVANKKK) are disordered. Over residues 105–120 (ARTRKGPRRTVANKKK) the composition is skewed to basic residues.

This sequence belongs to the universal ribosomal protein uS13 family. In terms of assembly, part of the 30S ribosomal subunit. Has been shown to cross-link to S19 forming a loose heterodimer. Forms two bridges to the 50S subunit in the 70S ribosome.

Its function is as follows. Located at the top of the head of the 30S subunit, it contacts several helices of the 16S rRNA. In the 70S ribosome it contacts the 23S rRNA (bridge B1a) and protein L5 of the 50S subunit (bridge B1b), connecting the 2 subunits; these bridges are implicated in subunit movement. Contacts the tRNA in the A and P-sites. The sequence is that of Small ribosomal subunit protein uS13 (rpsM) from Geobacillus stearothermophilus (Bacillus stearothermophilus).